A 755-amino-acid polypeptide reads, in one-letter code: PWWP domain-containing protein 2A (755 aa).

Residues M1–P15 are compositionally biased toward low complexity. The disordered stretch occupies residues M1–V153. The segment covering D64–G76 has biased composition (pro residues). A phosphoserine mark is found at S81, S102, S116, and S119. Positions E112–A126 are enriched in pro residues. The segment at G148–G373 is interaction with HDAC1 and MTA1. K208 is covalently cross-linked (Glycyl lysine isopeptide (Lys-Gly) (interchain with G-Cter in SUMO2)). 4 disordered regions span residues Y282–M301, K334–A384, K400–N562, and S578–E626. A compositionally biased stretch (basic residues) spans R292–M301. 2 stretches are compositionally biased toward basic and acidic residues: residues S346–E356 and D368–K381. Polar residues predominate over residues A403 to K421. Residues N422 to N444 are compositionally biased toward basic and acidic residues. The segment at M423 to K574 is interaction with the H2A.Z/H2AZ1. The segment covering S508–S527 has biased composition (polar residues). Low complexity predominate over residues S593–S603. The 61-residue stretch at V655–N715 folds into the PWWP domain.

As to quaternary structure, component of a MTA1-specific subcomplex of the NuRD complex (M1HR), composed of PWWP2A, MTA1/2, HDAC1/2, and RBBP4/7 but does not contain CHD4 and MBD3. Interacts with MTA1; the interaction mediates the association of PWWP2A with the M1HR complex. Interacts with H2A.Z/H2AZ1. Interacts (via PWWP domain) with histone H3 trimethylated at 'Lys-36' (H3K36me3). Does not interact with CHD4 and MBD3. In terms of assembly, interacts with MTA1 and with HDAC1 in a MTA1-dependent manner. Does not interact with CHD4 and MBD3.

It localises to the nucleus. In terms of biological role, chromatin-binding protein that acts as an adapter between distinct nucleosome components (H3K36me3 or H2A.Z) and chromatin-modifying complexes, contributing to the regulation of the levels of histone acetylation at actively transcribed genes. Competes with CHD4 and MBD3 for interaction with MTA1 to form a NuRD subcomplex, preventing the formation of full NuRD complex (containing CHD4 and MBD3), leading to recruitment of HDACs to gene promoters resulting in turn in the deacetylation of nearby H3K27 and H2A.Z. Plays a role in facilitating transcriptional elongation and repression of spurious transcription initiation through regulation of histone acetylation. Essential for proper mitosis progression. The chain is PWWP domain-containing protein 2A (PWWP2A) from Homo sapiens (Human).